The chain runs to 354 residues: 3-dehydroquinate synthase (354 aa).

NAD(+)-binding positions include G100–D104, T124–T125, K136, K145, and F163–T166. Zn(2+)-binding residues include E178, H242, and H256.

This sequence belongs to the sugar phosphate cyclases superfamily. Dehydroquinate synthase family. Co(2+) serves as cofactor. Requires Zn(2+) as cofactor. It depends on NAD(+) as a cofactor.

The protein resides in the cytoplasm. It carries out the reaction 7-phospho-2-dehydro-3-deoxy-D-arabino-heptonate = 3-dehydroquinate + phosphate. Its pathway is metabolic intermediate biosynthesis; chorismate biosynthesis; chorismate from D-erythrose 4-phosphate and phosphoenolpyruvate: step 2/7. Catalyzes the conversion of 3-deoxy-D-arabino-heptulosonate 7-phosphate (DAHP) to dehydroquinate (DHQ). The sequence is that of 3-dehydroquinate synthase from Staphylococcus aureus (strain NCTC 8325 / PS 47).